Consider the following 239-residue polypeptide: Fatty acid metabolism regulator protein (239 aa).

One can recognise an HTH gntR-type domain in the interval 6-74; sequence KGPASFAEKY…HGKPTRVNNF (69 aa). The H-T-H motif DNA-binding region spans 34–53; that stretch reads ERELSELIGVTRTTLREVLQ.

In terms of assembly, homodimer.

The protein localises to the cytoplasm. Functionally, multifunctional regulator of fatty acid metabolism. The polypeptide is Fatty acid metabolism regulator protein (Shewanella halifaxensis (strain HAW-EB4)).